Consider the following 195-residue polypeptide: Imidazoleglycerol-phosphate dehydratase (195 aa).

This sequence belongs to the imidazoleglycerol-phosphate dehydratase family.

The protein resides in the cytoplasm. It carries out the reaction D-erythro-1-(imidazol-4-yl)glycerol 3-phosphate = 3-(imidazol-4-yl)-2-oxopropyl phosphate + H2O. Its pathway is amino-acid biosynthesis; L-histidine biosynthesis; L-histidine from 5-phospho-alpha-D-ribose 1-diphosphate: step 6/9. The sequence is that of Imidazoleglycerol-phosphate dehydratase from Burkholderia mallei (strain NCTC 10247).